The following is a 441-amino-acid chain: Probable pyridine nucleotide-disulfide oxidoreductase RclA (441 aa).

33 to 43 (EQSNAMYGGTC) is a binding site for FAD. The cysteines at positions 43 and 48 are disulfide-linked. His-426 serves as the catalytic Proton acceptor.

This sequence belongs to the class-I pyridine nucleotide-disulfide oxidoreductase family. FAD serves as cofactor.

Its function is as follows. Probably involved in reactive chlorine species (RCS) stress resistance. In Escherichia coli (strain K12), this protein is Probable pyridine nucleotide-disulfide oxidoreductase RclA (rclA).